The primary structure comprises 541 residues: MESQRNILLIGLLFVSFLLWQQWQADKAPKPVATESSLVANAANSHSADVPEADTGVPAAVTATSKLITVKTDQLDVQINPIGGDIVFAALVSHKMEQDKDQPFVLLEQTKDFTYIAQSGLIGRDGIDSSAKGRAAFSTAATEYTLAEGQDTLEVPLTYVADNGVTYTKVFVFHRGKFNVDVDYKINNTSAAPLQVQMYGQIKQTIKPSESSMVMPTYRGGAFSTQDVRYEKYKFDDMAKSNLNQATLGGWAAMLQHYFVSAWIPPATDSNTIFSSVSAGGLANIGFRGAVYDIAPGATQEISSQFYVGPKDQKALSAISDTLNLVVDYGFLWWLAVPIHWLLMFYQSFVGNWGLAIILITLTVRGLLFPLTKAQYTSMAKMRNLQPKLTDLKERFGDDRQKMGQAMMELYKKEKVNPMGGCLPIILQMPIFIALYWVLLESFELRHAPFMLWIHDLSVQDPYYILPLLMGVSMFVMQKMQPIAPTMDPMQVKMMQWMPVIFTVFFLWFPAGLVLYWLVGNIVAITQQKIIYAGLAKKGLK.

Helical transmembrane passes span 6 to 26 (NILL…WQAD), 325 to 345 (LVVD…LLMF), 349 to 369 (FVGN…GLLF), 420 to 440 (GGCL…WVLL), 457 to 477 (LSVQ…MFVM), and 500 to 520 (VIFT…WLVG).

Belongs to the OXA1/ALB3/YidC family. Type 1 subfamily. In terms of assembly, interacts with the Sec translocase complex via SecD. Specifically interacts with transmembrane segments of nascent integral membrane proteins during membrane integration.

Its subcellular location is the cell inner membrane. Functionally, required for the insertion and/or proper folding and/or complex formation of integral membrane proteins into the membrane. Involved in integration of membrane proteins that insert both dependently and independently of the Sec translocase complex, as well as at least some lipoproteins. Aids folding of multispanning membrane proteins. This chain is Membrane protein insertase YidC, found in Shewanella baltica (strain OS195).